The sequence spans 441 residues: Amino-acid acetyltransferase (441 aa).

In terms of domain architecture, N-acetyltransferase spans 295 to 434 (EQVRRATIND…QELYNYQRRS (140 aa)).

Belongs to the acetyltransferase family. ArgA subfamily. As to quaternary structure, homohexamer.

It localises to the cytoplasm. It catalyses the reaction L-glutamate + acetyl-CoA = N-acetyl-L-glutamate + CoA + H(+). It functions in the pathway amino-acid biosynthesis; L-arginine biosynthesis; N(2)-acetyl-L-ornithine from L-glutamate: step 1/4. The polypeptide is Amino-acid acetyltransferase (Yersinia enterocolitica serotype O:8 / biotype 1B (strain NCTC 13174 / 8081)).